The following is a 271-amino-acid chain: Tryptophan synthase alpha chain (271 aa).

Residues E56 and D67 each act as proton acceptor in the active site.

The protein belongs to the TrpA family. Tetramer of two alpha and two beta chains.

The catalysed reaction is (1S,2R)-1-C-(indol-3-yl)glycerol 3-phosphate + L-serine = D-glyceraldehyde 3-phosphate + L-tryptophan + H2O. Its pathway is amino-acid biosynthesis; L-tryptophan biosynthesis; L-tryptophan from chorismate: step 5/5. Functionally, the alpha subunit is responsible for the aldol cleavage of indoleglycerol phosphate to indole and glyceraldehyde 3-phosphate. The protein is Tryptophan synthase alpha chain of Mycobacterium intracellulare.